The following is a 265-amino-acid chain: uncharacterized protein (265 aa).

Glutamate 47 contacts thiamine diphosphate. The interval 204 to 247 (QHQMWLVQHILRVARHCGFTVTTMEMTLIETQVRLKITVKSDRT) is thiamine pyrophosphate binding.

Belongs to the TPP enzyme family. Requires Mg(2+) as cofactor. Thiamine diphosphate is required as a cofactor.

Truncated acetolactase synthase; no longer catalytically active. This is an uncharacterized protein from Haemophilus influenzae (strain ATCC 51907 / DSM 11121 / KW20 / Rd).